A 249-amino-acid polypeptide reads, in one-letter code: Homeobox protein TGIF2LX (249 aa).

Disordered regions lie at residues 1 to 65 (MEAA…GYSP) and 126 to 199 (DPIV…PKKK). Over residues 9–27 (AETRSRVEKDSRRAIKDSP) the composition is skewed to basic and acidic residues. The span at 28-46 (AKTQSPAQDTSIMLRNNAD) shows a compositional bias: polar residues. The segment at residues 55-118 (EHKKKRKGYS…INARRRILPD (64 aa)) is a DNA-binding region (homeobox; TALE-type). Polar residues predominate over residues 159-172 (DNVQSLPLRSSPKG).

This sequence belongs to the TALE/TGIF homeobox family.

It localises to the nucleus. May have a transcription role in testis. The protein is Homeobox protein TGIF2LX (TGIF2LX) of Macaca mulatta (Rhesus macaque).